We begin with the raw amino-acid sequence, 173 residues long: Putative MgpC-like protein MPN_092 (173 aa).

This sequence belongs to the MgpC family.

The protein is Putative MgpC-like protein MPN_092 of Mycoplasma pneumoniae (strain ATCC 29342 / M129 / Subtype 1) (Mycoplasmoides pneumoniae).